The chain runs to 203 residues: Probable proteasome subunit beta type-1 (203 aa).

Positions 1-10 are cleaved as a propeptide — removed in mature form; the sequence is MMSNEKEMTG. T11 acts as the Nucleophile in catalysis.

The protein belongs to the peptidase T1B family. As to quaternary structure, the 26S proteasome consists of a 20S proteasome core and two 19S regulatory subunits. The 20S proteasome core is composed of 28 subunits that are arranged in four stacked rings, resulting in a barrel-shaped structure. The two end rings are each formed by seven alpha subunits, and the two central rings are each formed by seven beta subunits. The catalytic chamber with the active sites is on the inside of the barrel.

It is found in the cytoplasm. The protein localises to the nucleus. The enzyme catalyses Cleavage of peptide bonds with very broad specificity.. Functionally, the proteasome degrades poly-ubiquitinated proteins in the cytoplasm and in the nucleus. It is essential for the regulated turnover of proteins and for the removal of misfolded proteins. The proteasome is a multicatalytic proteinase complex that is characterized by its ability to cleave peptides with Arg, Phe, Tyr, Leu, and Glu adjacent to the leaving group at neutral or slightly basic pH. It has an ATP-dependent proteolytic activity. This is Probable proteasome subunit beta type-1 (PRE3) from Encephalitozoon cuniculi (strain GB-M1) (Microsporidian parasite).